A 158-amino-acid polypeptide reads, in one-letter code: Large ribosomal subunit protein uL16 (158 aa).

The protein belongs to the universal ribosomal protein uL16 family. In terms of assembly, part of the 50S ribosomal subunit.

In terms of biological role, binds 23S rRNA and is also seen to make contacts with the A and possibly P site tRNAs. In Prochlorococcus marinus (strain MIT 9303), this protein is Large ribosomal subunit protein uL16.